The primary structure comprises 343 residues: Uroporphyrinogen decarboxylase (343 aa).

Substrate contacts are provided by residues 23-27 (RQAGR), Asp73, Tyr150, Ser205, and His322.

It belongs to the uroporphyrinogen decarboxylase family. Homodimer.

The protein resides in the cytoplasm. It catalyses the reaction uroporphyrinogen III + 4 H(+) = coproporphyrinogen III + 4 CO2. It participates in porphyrin-containing compound metabolism; protoporphyrin-IX biosynthesis; coproporphyrinogen-III from 5-aminolevulinate: step 4/4. Functionally, catalyzes the decarboxylation of four acetate groups of uroporphyrinogen-III to yield coproporphyrinogen-III. The sequence is that of Uroporphyrinogen decarboxylase from Cereibacter sphaeroides (strain ATCC 17029 / ATH 2.4.9) (Rhodobacter sphaeroides).